The primary structure comprises 202 residues: Peptide methionine sulfoxide reductase A1 (202 aa).

The disordered stretch occupies residues 1 to 20 (MNILNKLGIGSSRQTNMDPS). Residue serine 189 is modified to Phosphoserine.

Belongs to the MsrA Met sulfoxide reductase family.

It localises to the cytoplasm. The protein resides in the cytosol. The enzyme catalyses L-methionyl-[protein] + [thioredoxin]-disulfide + H2O = L-methionyl-(S)-S-oxide-[protein] + [thioredoxin]-dithiol. It catalyses the reaction [thioredoxin]-disulfide + L-methionine + H2O = L-methionine (S)-S-oxide + [thioredoxin]-dithiol. In terms of biological role, catalyzes the reduction of methionine sulfoxide (MetSO) to methionine in proteins. Plays a protective role against oxidative stress by restoring activity to proteins that have been inactivated by methionine oxidation. MSRA family specifically reduces the MetSO S-enantiomer. The polypeptide is Peptide methionine sulfoxide reductase A1 (MSRA1) (Arabidopsis thaliana (Mouse-ear cress)).